The following is a 567-amino-acid chain: Cytochrome P450 monooxygenase 231 (567 aa).

Residues 3–23 (VSTNELAILAIVLLATGVLFY) form a helical membrane-spanning segment. Residues Asn-81 and Asn-223 are each glycosylated (N-linked (GlcNAc...) asparagine). Cys-475 contributes to the heme binding site.

Belongs to the cytochrome P450 family. Requires heme as cofactor.

It localises to the membrane. It participates in secondary metabolite biosynthesis. Cytochrome P450 monooxygenase that is able to use anthracene, carbazole, pyrene, and phenanthrene as substrates for oxidation. These multifunctional properties against a series of polycyclic aromatic hydrocarbons (PAHs) suggest that CYP231 would play important roles, at least in part, in fungal metabolic systems involved in xenobiotic detoxification. This Postia placenta (strain ATCC 44394 / Madison 698-R) (Brown rot fungus) protein is Cytochrome P450 monooxygenase 231.